A 167-amino-acid polypeptide reads, in one-letter code: 6,7-dimethyl-8-ribityllumazine synthase (167 aa).

Residues Phe-26, 60-62 (AFE), and 89-91 (AII) each bind 5-amino-6-(D-ribitylamino)uracil. 94–95 (ET) provides a ligand contact to (2S)-2-hydroxy-3-oxobutyl phosphate. The Proton donor role is filled by His-97. A 5-amino-6-(D-ribitylamino)uracil-binding site is contributed by Phe-122. A (2S)-2-hydroxy-3-oxobutyl phosphate-binding site is contributed by Arg-136.

It belongs to the DMRL synthase family. In terms of assembly, forms an icosahedral capsid composed of 60 subunits, arranged as a dodecamer of pentamers.

The enzyme catalyses (2S)-2-hydroxy-3-oxobutyl phosphate + 5-amino-6-(D-ribitylamino)uracil = 6,7-dimethyl-8-(1-D-ribityl)lumazine + phosphate + 2 H2O + H(+). Its pathway is cofactor biosynthesis; riboflavin biosynthesis; riboflavin from 2-hydroxy-3-oxobutyl phosphate and 5-amino-6-(D-ribitylamino)uracil: step 1/2. In terms of biological role, catalyzes the formation of 6,7-dimethyl-8-ribityllumazine by condensation of 5-amino-6-(D-ribitylamino)uracil with 3,4-dihydroxy-2-butanone 4-phosphate. This is the penultimate step in the biosynthesis of riboflavin. The polypeptide is 6,7-dimethyl-8-ribityllumazine synthase (Ruthia magnifica subsp. Calyptogena magnifica).